We begin with the raw amino-acid sequence, 176 residues long: Inner membrane-spanning protein YciB (176 aa).

The next 5 membrane-spanning stretches (helical) occupy residues 23–43, 50–70, 74–94, 119–139, and 150–170; these read MIAA…FLYW, TMQW…IVLG, FIMW…LGSH, LTYM…FVFT, and MFGS…YLST.

The protein belongs to the YciB family.

It is found in the cell inner membrane. In terms of biological role, plays a role in cell envelope biogenesis, maintenance of cell envelope integrity and membrane homeostasis. This is Inner membrane-spanning protein YciB from Neisseria gonorrhoeae (strain ATCC 700825 / FA 1090).